The following is a 92-amino-acid chain: MTRSLKKNPFVANRLLRKIDKLNTKAEKEIIITWSRASTIIPTMIGHTIAIHNGKEHLPIYINDRMVGHKLGEFAPTLNFRGHAKSDNRSRR.

It belongs to the universal ribosomal protein uS19 family.

The protein resides in the plastid. It localises to the chloroplast. Functionally, protein S19 forms a complex with S13 that binds strongly to the 16S ribosomal RNA. The protein is Small ribosomal subunit protein uS19c of Panax ginseng (Korean ginseng).